Here is a 292-residue protein sequence, read N- to C-terminus: AKT-interacting protein (292 aa).

Residues 1 to 11 (MNPLWSMSSGS) are compositionally biased toward polar residues. Residues 1–64 (MNPLWSMSSG…SPAPAAQSTN (64 aa)) are disordered. Over residues 14–23 (KRAEGEEKTL) the composition is skewed to basic and acidic residues. S30 is modified (phosphoserine). In terms of domain architecture, UBC core spans 74 to 222 (YLEYSLLAEF…VVDSVKVCTA (149 aa)).

Belongs to the ubiquitin-conjugating enzyme family. FTS subfamily. As to quaternary structure, component of the FTS/Hook/FHIP complex (FHF complex), composed of AKTIP/FTS, FHIP1B, and one or more members of the Hook family of proteins HOOK1, HOOK2, and HOOK3. Interacts directly with HOOK1, HOOK2 and HOOK3. The FHF complex associates with the homotypic vesicular sorting complex (the HOPS complex). Also interacts with AKT1. May interact with FHIP1A.

The protein resides in the cytoplasm. It is found in the cell membrane. Functionally, component of the FTS/Hook/FHIP complex (FHF complex). The FHF complex may function to promote vesicle trafficking and/or fusion via the homotypic vesicular protein sorting complex (the HOPS complex). Regulates apoptosis by enhancing phosphorylation and activation of AKT1. Increases release of TNFSF6 via the AKT1/GSK3B/NFATC1 signaling cascade. FHF complex promotes the distribution of AP-4 complex to the perinuclear area of the cell. In Rattus norvegicus (Rat), this protein is AKT-interacting protein (Aktip).